Reading from the N-terminus, the 205-residue chain is Histidine biosynthesis bifunctional protein HisIE (205 aa).

The segment at 1–115 is phosphoribosyl-AMP cyclohydrolase; sequence MIDIKELKFD…DEETEDGIEI (115 aa). Residues 116–205 form a phosphoribosyl-ATP pyrophosphohydrolase region; that stretch reads LNKLYERIKG…YNELERRYKK (90 aa).

The protein in the N-terminal section; belongs to the PRA-CH family. In the C-terminal section; belongs to the PRA-PH family.

It is found in the cytoplasm. The enzyme catalyses 1-(5-phospho-beta-D-ribosyl)-ATP + H2O = 1-(5-phospho-beta-D-ribosyl)-5'-AMP + diphosphate + H(+). It catalyses the reaction 1-(5-phospho-beta-D-ribosyl)-5'-AMP + H2O = 1-(5-phospho-beta-D-ribosyl)-5-[(5-phospho-beta-D-ribosylamino)methylideneamino]imidazole-4-carboxamide. The protein operates within amino-acid biosynthesis; L-histidine biosynthesis; L-histidine from 5-phospho-alpha-D-ribose 1-diphosphate: step 2/9. It functions in the pathway amino-acid biosynthesis; L-histidine biosynthesis; L-histidine from 5-phospho-alpha-D-ribose 1-diphosphate: step 3/9. This Caldanaerobacter subterraneus subsp. tengcongensis (strain DSM 15242 / JCM 11007 / NBRC 100824 / MB4) (Thermoanaerobacter tengcongensis) protein is Histidine biosynthesis bifunctional protein HisIE.